Reading from the N-terminus, the 206-residue chain is Small ribosomal subunit protein uS4 (206 aa).

The disordered stretch occupies residues 15-46; the sequence is MGENIWGRPKSPVNKREYGPGQHGQRRKNKLS. The 61-residue stretch at 94–154 folds into the S4 RNA-binding domain; sequence RRLDAIVYRA…EKSRQLALVL (61 aa).

The protein belongs to the universal ribosomal protein uS4 family. In terms of assembly, part of the 30S ribosomal subunit. Contacts protein S5. The interaction surface between S4 and S5 is involved in control of translational fidelity.

One of the primary rRNA binding proteins, it binds directly to 16S rRNA where it nucleates assembly of the body of the 30S subunit. Its function is as follows. With S5 and S12 plays an important role in translational accuracy. The sequence is that of Small ribosomal subunit protein uS4 from Cereibacter sphaeroides (strain ATCC 17029 / ATH 2.4.9) (Rhodobacter sphaeroides).